The primary structure comprises 434 residues: Methylenetetrahydrofolate--tRNA-(uracil-5-)-methyltransferase TrmFO (434 aa).

8–13 (GAGLAG) contacts FAD.

This sequence belongs to the MnmG family. TrmFO subfamily. It depends on FAD as a cofactor.

The protein resides in the cytoplasm. The catalysed reaction is uridine(54) in tRNA + (6R)-5,10-methylene-5,6,7,8-tetrahydrofolate + NADH + H(+) = 5-methyluridine(54) in tRNA + (6S)-5,6,7,8-tetrahydrofolate + NAD(+). The enzyme catalyses uridine(54) in tRNA + (6R)-5,10-methylene-5,6,7,8-tetrahydrofolate + NADPH + H(+) = 5-methyluridine(54) in tRNA + (6S)-5,6,7,8-tetrahydrofolate + NADP(+). In terms of biological role, catalyzes the folate-dependent formation of 5-methyl-uridine at position 54 (M-5-U54) in all tRNAs. This chain is Methylenetetrahydrofolate--tRNA-(uracil-5-)-methyltransferase TrmFO, found in Exiguobacterium sibiricum (strain DSM 17290 / CCUG 55495 / CIP 109462 / JCM 13490 / 255-15).